The primary structure comprises 339 residues: Ornithine utilization regulator (339 aa).

The 98-residue stretch at 241-338 (TRVRRLLLAR…GKLPSDYREA (98 aa)) folds into the HTH araC/xylS-type domain. 2 DNA-binding regions (H-T-H motif) span residues 258–279 (EQAA…SSLG) and 305–328 (LYEI…RKWT).

Functionally, probably activates the ArgJ gene that encodes ornithine acetyltransferase. Binds to its own promoter-operator region. Probably binds ornithine. The chain is Ornithine utilization regulator (oruR) from Pseudomonas aeruginosa (strain ATCC 15692 / DSM 22644 / CIP 104116 / JCM 14847 / LMG 12228 / 1C / PRS 101 / PAO1).